Consider the following 1044-residue polypeptide: Sarcoplasmic/endoplasmic reticulum calcium ATPase 2 (1044 aa).

Over 1–48 the chain is Cytoplasmic; that stretch reads MENAHTKTVEEVLGHFGVNESTGLSLEQVKKLKERWGSNELPAEEGKT. Ser-38 bears the Phosphoserine mark. The chain crosses the membrane as a helical span at residues 49 to 69; it reads LLELVIEQFEDLLVRILLLAA. At 70–89 the chain is on the lumenal side; the sequence is CISFVLAWFEEGEETITAFV. The helical transmembrane segment at 90–110 threads the bilayer; it reads EPFVILLILVANAIVGVWQER. At 111–253 the chain is on the cytoplasmic side; it reads NAENAIEALK…QERTPLQQKL (143 aa). A helical transmembrane segment spans residues 254–273; sequence DEFGEQLSKVISLICIAVWI. Topologically, residues 274–295 are lumenal; the sequence is INIGHFNDPVHGGSWIRGAIYY. 3'-nitrotyrosine occurs at positions 294 and 295. A helical transmembrane segment spans residues 296–313; the sequence is FKIAVALAVAAIPEGLPA. Ca(2+) contacts are provided by Val-304, Ala-305, Ile-307, and Glu-309. Topologically, residues 314 to 756 are cytoplasmic; the sequence is VITTCLALGT…EEGRAIYNNM (443 aa). The active-site 4-aspartylphosphate intermediate is Asp-351. Residues Asp-351 and Thr-353 each coordinate Mg(2+). Thr-353 contacts ATP. The residue at position 441 (Thr-441) is a Phosphothreonine. ATP is bound by residues Glu-442, Arg-489, and Lys-514. Ser-531 is subject to Phosphoserine. Arg-559 serves as a coordination point for ATP. Residues 575–594 are interaction with HAX1; that stretch reads MHLEDSANFIKYETNLTFVG. A Phosphoserine modification is found at Ser-580. ATP-binding residues include Thr-624, Gly-625, and Asp-626. 2 positions are modified to phosphoserine: Ser-661 and Ser-663. The ATP site is built by Arg-677 and Lys-683. Residue Asp-702 participates in Mg(2+) binding. Asn-705 is an ATP binding site. The helical transmembrane segment at 757–776 threads the bilayer; sequence KQFIRYLISSNVGEVVCIFL. Asn-767 and Glu-770 together coordinate Ca(2+). The Lumenal segment spans residues 777-786; it reads TAALGFPEAL. A helical membrane pass occupies residues 787–807; it reads IPVQLLWVNLVTDGLPATALG. Residues 787–807 are interaction with PLN; sequence IPVQLLWVNLVTDGLPATALG. The tract at residues 788-1044 is interaction with TMEM64 and PDIA3; it reads PVQLLWVNLV…DTNFSDMFWS (257 aa). 3 residues coordinate Ca(2+): Asn-795, Thr-798, and Asp-799. Over 808–827 the chain is Cytoplasmic; that stretch reads FNPPDLDIMNKPPRNPKEPL. A helical transmembrane segment spans residues 828 to 850; it reads ISGWLFFRYLAIGCYVGAATVGA. The Lumenal segment spans residues 851–896; it reads AAWWFIAADGGPRVSFYQLSHFLQCKEDNPDFDGVDCAIFESPYPM. A disulfide bridge connects residues Cys-875 and Cys-887. A helical transmembrane segment spans residues 897–916; that stretch reads TMALSVLVTIEMCNALNSLS. Glu-907 contacts Ca(2+). The Cytoplasmic portion of the chain corresponds to 917 to 929; that stretch reads ENQSLLRMPPWEN. The helical transmembrane segment at 930–948 threads the bilayer; that stretch reads IWLVGSICLSMSLHFLILY. The tract at residues 931-942 is interaction with PLN; the sequence is WLVGSICLSMSL. Over 949–963 the chain is Lumenal; sequence VEPLPLIFQITPLNL. A helical membrane pass occupies residues 964–984; it reads TQWLMVLKISLPVILMDETLK. Residues 985–1044 lie on the Cytoplasmic side of the membrane; that stretch reads FVARNYLEQPGKECVQPATKSSCSLSACTDGISWPFVLLIMPLVVWVYSTDTNFSDMFWS.

The protein belongs to the cation transport ATPase (P-type) (TC 3.A.3) family. Type IIA subfamily. Interacts with sarcolipin (SLN); the interaction inhibits ATP2A2 Ca(2+) affinity. Interacts with phospholamban (PLN); the interaction inhibits ATP2A2 Ca(2+) affinity. Interacts with myoregulin (MRLN). Interacts with ARLN and ERLN; the interactions inhibit ATP2A2 Ca(2+) affinity. Interacts with STRIT1/DWORF; the interaction results in activation of ATP2A2. Interacts with the monomeric forms of SLN, PLN, ARLN, ERLN and STRI1/DWORF. Interacts with HAX1. Interacts with S100A8 and S100A9. Interacts with SLC35G1 and STIM1. Interacts with TMEM203. Interacts with TMEM64 and PDIA3. Interacts with TMX1. Interacts with TMX2. Interacts with VMP1; VMP1 competes with PLN and SLN to prevent them from forming an inhibitory complex with ATP2A2. Interacts with ULK1. Interacts with S100A1 in a Ca(2+)-dependent manner. Interacts with TUNAR. Interacts with FLVCR2; this interaction occurs in the absence of heme and promotes ATP2A2 proteasomal degradation; this complex is dissociated upon heme binding. Interacts with FNIP1. As to quaternary structure, interacts with TRAM2 (via C-terminus). Mg(2+) serves as cofactor. Nitrated under oxidative stress. Nitration on the two tyrosine residues inhibits catalytic activity. In terms of processing, serotonylated on Gln residues by TGM2 in response to hypoxia, leading to its inactivation. Isoform 2 is highly expressed in heart and slow twitch skeletal muscle. Isoform 2 is widely expressed.

It is found in the endoplasmic reticulum membrane. The protein resides in the sarcoplasmic reticulum membrane. The catalysed reaction is Ca(2+)(in) + ATP + H2O = Ca(2+)(out) + ADP + phosphate + H(+). With respect to regulation, has different conformational states with differential Ca2+ affinity. The E1 conformational state (active form) shows high Ca(2+) affinity, while the E2 state exhibits low Ca(2+) affinity. Binding of ATP allosterically increases its affinity for subsequent binding of Ca2+. Reversibly inhibited by phospholamban (PLN) at low calcium concentrations. PLN inhibits ATP2A2 Ca(2+) affinity by disrupting its allosteric activation by ATP. Inhibited by sarcolipin (SLN) and myoregulin (MRLN). The inhibition is blocked by VMP1. Enhanced by STRIT1/DWORF; STRIT1 increases activity by displacing sarcolipin (SLN), phospholamban (PLN) and myoregulin (MRLN). Stabilizes SERCA2 in its E2 state. Functionally, this magnesium-dependent enzyme catalyzes the hydrolysis of ATP coupled with the translocation of calcium from the cytosol to the sarcoplasmic reticulum lumen. Involved in autophagy in response to starvation. Upon interaction with VMP1 and activation, controls ER-isolation membrane contacts for autophagosome formation. Also modulates ER contacts with lipid droplets, mitochondria and endosomes. In coordination with FLVCR2 mediates heme-stimulated switching from mitochondrial ATP synthesis to thermogenesis. In terms of biological role, involved in the regulation of the contraction/relaxation cycle. Acts as a regulator of TNFSF11-mediated Ca(2+) signaling pathways via its interaction with TMEM64 which is critical for the TNFSF11-induced CREB1 activation and mitochondrial ROS generation necessary for proper osteoclast generation. Association between TMEM64 and SERCA2 in the ER leads to cytosolic Ca(2+) spiking for activation of NFATC1 and production of mitochondrial ROS, thereby triggering Ca(2+) signaling cascades that promote osteoclast differentiation and activation. In Mus musculus (Mouse), this protein is Sarcoplasmic/endoplasmic reticulum calcium ATPase 2.